A 446-amino-acid polypeptide reads, in one-letter code: Phosphoglucosamine mutase (446 aa).

The Phosphoserine intermediate role is filled by Ser-103. Positions 103, 242, 244, and 246 each coordinate Mg(2+). Phosphoserine is present on Ser-103.

The protein belongs to the phosphohexose mutase family. The cofactor is Mg(2+). Post-translationally, activated by phosphorylation.

The enzyme catalyses alpha-D-glucosamine 1-phosphate = D-glucosamine 6-phosphate. In terms of biological role, catalyzes the conversion of glucosamine-6-phosphate to glucosamine-1-phosphate. This Vibrio cholerae serotype O1 (strain ATCC 39315 / El Tor Inaba N16961) protein is Phosphoglucosamine mutase.